The following is a 130-amino-acid chain: Small ribosomal subunit protein eS17 (130 aa).

The protein belongs to the eukaryotic ribosomal protein eS17 family.

The chain is Small ribosomal subunit protein eS17 (RPS17) from Theileria parva (East coast fever infection agent).